The primary structure comprises 393 residues: Small RNA 2'-O-methyltransferase (393 aa).

Residues Ser60, Asp78, and Ser114 each coordinate S-adenosyl-L-methionine. Glu132, Glu135, His136, and His181 together coordinate Mg(2+). Positions 283-309 are disordered; it reads RVSHLPRRKEQDGEQGDKPKDIGGSKA. Basic and acidic residues predominate over residues 290–305; it reads RKEQDGEQGDKPKDIG.

Belongs to the methyltransferase superfamily. HEN1 family. Mg(2+) is required as a cofactor.

The protein localises to the cytoplasm. It catalyses the reaction small RNA 3'-end nucleotide + S-adenosyl-L-methionine = small RNA 3'-end 2'-O-methylnucleotide + S-adenosyl-L-homocysteine + H(+). Methyltransferase that adds a 2'-O-methyl group at the 3'-end of piRNAs, a class of 24 to 30 nucleotide RNAs that are generated by a Dicer-independent mechanism and are primarily derived from transposons and other repeated sequence elements. This probably protects the 3'-end of piRNAs from uridylation activity and subsequent degradation. Stabilization of piRNAs is essential for gametogenesis. This Macaca fascicularis (Crab-eating macaque) protein is Small RNA 2'-O-methyltransferase (HENMT1).